The primary structure comprises 170 residues: ATP synthase subunit b (170 aa).

Residues 11-31 (AFTFGDAFFTLFAFAILLVLI) form a helical membrane-spanning segment.

Belongs to the ATPase B chain family. F-type ATPases have 2 components, F(1) - the catalytic core - and F(0) - the membrane proton channel. F(1) has five subunits: alpha(3), beta(3), gamma(1), delta(1), epsilon(1). F(0) has three main subunits: a(1), b(2) and c(10-14). The alpha and beta chains form an alternating ring which encloses part of the gamma chain. F(1) is attached to F(0) by a central stalk formed by the gamma and epsilon chains, while a peripheral stalk is formed by the delta and b chains.

It is found in the cell membrane. Functionally, f(1)F(0) ATP synthase produces ATP from ADP in the presence of a proton or sodium gradient. F-type ATPases consist of two structural domains, F(1) containing the extramembraneous catalytic core and F(0) containing the membrane proton channel, linked together by a central stalk and a peripheral stalk. During catalysis, ATP synthesis in the catalytic domain of F(1) is coupled via a rotary mechanism of the central stalk subunits to proton translocation. Component of the F(0) channel, it forms part of the peripheral stalk, linking F(1) to F(0). The protein is ATP synthase subunit b of Listeria welshimeri serovar 6b (strain ATCC 35897 / DSM 20650 / CCUG 15529 / CIP 8149 / NCTC 11857 / SLCC 5334 / V8).